The sequence spans 417 residues: Tol-Pal system protein TolB (417 aa).

The signal sequence occupies residues 1 to 16; the sequence is MKYLWLFLIYAIGLFA.

Belongs to the TolB family. As to quaternary structure, the Tol-Pal system is composed of five core proteins: the inner membrane proteins TolA, TolQ and TolR, the periplasmic protein TolB and the outer membrane protein Pal. They form a network linking the inner and outer membranes and the peptidoglycan layer.

Its subcellular location is the periplasm. Functionally, part of the Tol-Pal system, which plays a role in outer membrane invagination during cell division and is important for maintaining outer membrane integrity. The polypeptide is Tol-Pal system protein TolB (Helicobacter pylori (strain J99 / ATCC 700824) (Campylobacter pylori J99)).